We begin with the raw amino-acid sequence, 205 residues long: FMN-dependent NADH:quinone oxidoreductase (205 aa).

FMN is bound by residues S10, 16 to 18 (SHS), and 96 to 99 (MYNF).

Belongs to the azoreductase type 1 family. In terms of assembly, homodimer. The cofactor is FMN.

It carries out the reaction 2 a quinone + NADH + H(+) = 2 a 1,4-benzosemiquinone + NAD(+). The enzyme catalyses N,N-dimethyl-1,4-phenylenediamine + anthranilate + 2 NAD(+) = 2-(4-dimethylaminophenyl)diazenylbenzoate + 2 NADH + 2 H(+). Quinone reductase that provides resistance to thiol-specific stress caused by electrophilic quinones. Functionally, also exhibits azoreductase activity. Catalyzes the reductive cleavage of the azo bond in aromatic azo compounds to the corresponding amines. The sequence is that of FMN-dependent NADH:quinone oxidoreductase from Nostoc punctiforme (strain ATCC 29133 / PCC 73102).